A 302-amino-acid polypeptide reads, in one-letter code: Homoserine O-acetyltransferase (302 aa).

Catalysis depends on C142, which acts as the Acyl-thioester intermediate. Residues K163 and S192 each coordinate substrate. H235 acts as the Proton acceptor in catalysis. E237 is a catalytic residue. Residue R249 coordinates substrate.

It belongs to the MetA family.

The protein localises to the cytoplasm. The enzyme catalyses L-homoserine + acetyl-CoA = O-acetyl-L-homoserine + CoA. Its pathway is amino-acid biosynthesis; L-methionine biosynthesis via de novo pathway; O-acetyl-L-homoserine from L-homoserine: step 1/1. In terms of biological role, transfers an acetyl group from acetyl-CoA to L-homoserine, forming acetyl-L-homoserine. The polypeptide is Homoserine O-acetyltransferase (Clostridium novyi (strain NT)).